Consider the following 224-residue polypeptide: Phosphoribosylformylglycinamidine synthase subunit PurQ (224 aa).

A Glutamine amidotransferase type-1 domain is found at 2–224; it reads KFAVIVFPGS…IVDNFVKGGV (223 aa). Cys86 serves as the catalytic Nucleophile. Residues His194 and Glu196 contribute to the active site.

Part of the FGAM synthase complex composed of 1 PurL, 1 PurQ and 2 PurS subunits.

The protein localises to the cytoplasm. The catalysed reaction is N(2)-formyl-N(1)-(5-phospho-beta-D-ribosyl)glycinamide + L-glutamine + ATP + H2O = 2-formamido-N(1)-(5-O-phospho-beta-D-ribosyl)acetamidine + L-glutamate + ADP + phosphate + H(+). It catalyses the reaction L-glutamine + H2O = L-glutamate + NH4(+). It participates in purine metabolism; IMP biosynthesis via de novo pathway; 5-amino-1-(5-phospho-D-ribosyl)imidazole from N(2)-formyl-N(1)-(5-phospho-D-ribosyl)glycinamide: step 1/2. Part of the phosphoribosylformylglycinamidine synthase complex involved in the purines biosynthetic pathway. Catalyzes the ATP-dependent conversion of formylglycinamide ribonucleotide (FGAR) and glutamine to yield formylglycinamidine ribonucleotide (FGAM) and glutamate. The FGAM synthase complex is composed of three subunits. PurQ produces an ammonia molecule by converting glutamine to glutamate. PurL transfers the ammonia molecule to FGAR to form FGAM in an ATP-dependent manner. PurS interacts with PurQ and PurL and is thought to assist in the transfer of the ammonia molecule from PurQ to PurL. The sequence is that of Phosphoribosylformylglycinamidine synthase subunit PurQ from Caldanaerobacter subterraneus subsp. tengcongensis (strain DSM 15242 / JCM 11007 / NBRC 100824 / MB4) (Thermoanaerobacter tengcongensis).